We begin with the raw amino-acid sequence, 854 residues long: Protein asteroid (854 aa).

The interval 368–427 is disordered; the sequence is SEEECSDDEHSSSSDEKFSDVEEGEDQEEADNQDEEQQEENQDVDSGDEEEEEADEGLEL. A compositionally biased stretch (basic and acidic residues) spans 375–387; sequence DEHSSSSDEKFSD. Positions 388 to 427 are enriched in acidic residues; the sequence is VEEGEDQEEADNQDEEQQEENQDVDSGDEEEEEADEGLEL.

The protein belongs to the asteroid family. As to expression, expressed in the proliferative tissues of embryos and in the mitotically active tissue anterior to the morphogenetic furrow in eye imaginal disks.

May function in EGF receptor signaling. May play a role in compound eye morphogenesis. The protein is Protein asteroid (ast) of Drosophila melanogaster (Fruit fly).